A 197-amino-acid polypeptide reads, in one-letter code: Nascent polypeptide-associated complex subunit alpha (197 aa).

Positions 1-18 are enriched in basic and acidic residues; the sequence is MTGSTETRHNEKDVKEPQ. Residues 1 to 30 are disordered; sequence MTGSTETRHNEKDVKEPQVDSDADSDNEAI. Positions 19-28 are enriched in acidic residues; that stretch reads VDSDADSDNE. One can recognise an NAC-A/B domain in the interval 58–123; it reads SRSEKKARKL…AKIEDLTQHA (66 aa). Residues 134–155 form a disordered region; it reads TREAPQLKTVEEDDNEDVEEDS. Residues 144-155 show a composition bias toward acidic residues; that stretch reads EEDDNEDVEEDS. One can recognise a UBA domain in the interval 158–195; sequence IEEKDIELVISQANTTRNKAIRALKDADNDIVNAIMSL.

This sequence belongs to the NAC-alpha family.

Functionally, may promote appropriate targeting of ribosome-nascent polypeptide complexes. In Caenorhabditis briggsae, this protein is Nascent polypeptide-associated complex subunit alpha.